A 288-amino-acid polypeptide reads, in one-letter code: Bifunctional protein FolD (288 aa).

Residues G165 to S167, S190, and I231 contribute to the NADP(+) site.

The protein belongs to the tetrahydrofolate dehydrogenase/cyclohydrolase family. Homodimer.

The catalysed reaction is (6R)-5,10-methylene-5,6,7,8-tetrahydrofolate + NADP(+) = (6R)-5,10-methenyltetrahydrofolate + NADPH. The enzyme catalyses (6R)-5,10-methenyltetrahydrofolate + H2O = (6R)-10-formyltetrahydrofolate + H(+). It functions in the pathway one-carbon metabolism; tetrahydrofolate interconversion. Catalyzes the oxidation of 5,10-methylenetetrahydrofolate to 5,10-methenyltetrahydrofolate and then the hydrolysis of 5,10-methenyltetrahydrofolate to 10-formyltetrahydrofolate. This is Bifunctional protein FolD from Nitrosospira multiformis (strain ATCC 25196 / NCIMB 11849 / C 71).